A 357-amino-acid chain; its full sequence is MHNQYGSIFSITTWGESHGPAIGVVIDGCPAGLSLSPEDFLPAMARRRPGQLHTSPRQEPDLVTILSGVYQNKTTGTPISLLIENKDVSSSSYEQLQHCYRPGHAQFAYEGKYGFADNRGGGRASARETASRVAAGVIAKKILLSQRIETLAFLSGFGTLESKNYPKLSDSLIQQVHTSPFYTLLPQEEIQNLLLLNPDDSFGGVVSFITSPLPIGLGEPVFGKLPALLAAAMMSIPAAKGFEIGAGFSSSQMTGSAYLDAFIADESGVSLQSNRCGGALGGISIGQPLEGRVAFKPTSSIKKPCSSVLKDGTLIAYRTPNQGRHDPCVAIRAVAVVEAMLDLTLVDLLLQHRCTQL.

R47 contacts NADP(+). FMN contacts are provided by residues 123-125, G281, 296-300, and R324; these read RAS and KPTSS.

The protein belongs to the chorismate synthase family. In terms of assembly, homotetramer. Requires FMNH2 as cofactor.

It carries out the reaction 5-O-(1-carboxyvinyl)-3-phosphoshikimate = chorismate + phosphate. It participates in metabolic intermediate biosynthesis; chorismate biosynthesis; chorismate from D-erythrose 4-phosphate and phosphoenolpyruvate: step 7/7. In terms of biological role, catalyzes the anti-1,4-elimination of the C-3 phosphate and the C-6 proR hydrogen from 5-enolpyruvylshikimate-3-phosphate (EPSP) to yield chorismate, which is the branch point compound that serves as the starting substrate for the three terminal pathways of aromatic amino acid biosynthesis. This reaction introduces a second double bond into the aromatic ring system. The chain is Chorismate synthase from Chlamydia trachomatis serovar D (strain ATCC VR-885 / DSM 19411 / UW-3/Cx).